The primary structure comprises 450 residues: Dol-P-Glc:Glc(2)Man(9)GlcNAc(2)-PP-Dol alpha-1,2-glucosyltransferase (450 aa).

A helical membrane pass occupies residues 12–32 (ISIISKYVAIVIFLIFVIIMF). An N-linked (GlcNAc...) asparagine glycan is attached at asparagine 34. 4 helical membrane passes run 158 to 178 (YFLF…LGLI), 190 to 210 (ALVG…IAFI), 243 to 263 (LLGY…NGGI), and 273 to 293 (IELH…FTIP). Residue asparagine 297 is glycosylated (N-linked (GlcNAc...) asparagine). 4 helical membrane passes run 312–332 (IILN…FTIV), 357–377 (LKPL…SSLI), 384–404 (FIGI…SPLF), and 429–449 (FIWL…KGII).

This sequence belongs to the ALG10 glucosyltransferase family.

Its subcellular location is the endoplasmic reticulum membrane. It carries out the reaction an alpha-D-Glc-(1-&gt;3)-alpha-D-Glc-(1-&gt;3)-alpha-D-Man-(1-&gt;2)-alpha-D-Man-(1-&gt;2)-alpha-D-Man-(1-&gt;3)-[alpha-D-Man-(1-&gt;2)-alpha-D-Man-(1-&gt;3)-[alpha-D-Man-(1-&gt;2)-alpha-D-Man-(1-&gt;6)]-alpha-D-Man-(1-&gt;6)]-beta-D-Man-(1-&gt;4)-beta-D-GlcNAc-(1-&gt;4)-alpha-D-GlcNAc-diphospho-di-trans,poly-cis-dolichol + a di-trans,poly-cis-dolichyl beta-D-glucosyl phosphate = a alpha-D-Glc-(1-&gt;2)-alpha-D-Glc-(1-&gt;3)-alpha-D-Glc-(1-&gt;3)-alpha-D-Man-(1-&gt;2)-alpha-D-Man-(1-&gt;2)-alpha-D-Man-(1-&gt;3)-[alpha-D-Man-(1-&gt;2)-alpha-D-Man-(1-&gt;3)-[alpha-D-Man-(1-&gt;2)-alpha-D-Man-(1-&gt;6)]-alpha-D-Man-(1-&gt;6)]-beta-D-Man-(1-&gt;4)-beta-D-GlcNAc-(1-&gt;4)-alpha-D-GlcNAc-diphospho-di-trans,poly-cis-dolichol + a di-trans,poly-cis-dolichyl phosphate + H(+). It functions in the pathway protein modification; protein glycosylation. In terms of biological role, dol-P-Glc:Glc(2)Man(9)GlcNAc(2)-PP-Dol alpha-1,2-glucosyltransferase that operates in the biosynthetic pathway of dolichol-linked oligosaccharides, the glycan precursors employed in protein asparagine (N)-glycosylation. The assembly of dolichol-linked oligosaccharides begins on the cytosolic side of the endoplasmic reticulum membrane and finishes in its lumen. The sequential addition of sugars to dolichol pyrophosphate produces dolichol-linked oligosaccharides containing fourteen sugars, including two GlcNAcs, nine mannoses and three glucoses. Once assembled, the oligosaccharide is transferred from the lipid to nascent proteins by oligosaccharyltransferases. In the lumen of the endoplasmic reticulum, adds the third and last glucose residue from dolichyl phosphate glucose (Dol-P-Glc) onto the lipid-linked oligosaccharide intermediate Glc(2)Man(9)GlcNAc(2)-PP-Dol to produce Glc(3)Man(9)GlcNAc(2)-PP-Dol. In Candida albicans (strain SC5314 / ATCC MYA-2876) (Yeast), this protein is Dol-P-Glc:Glc(2)Man(9)GlcNAc(2)-PP-Dol alpha-1,2-glucosyltransferase (DIE2).